The chain runs to 282 residues: 4-diphosphocytidyl-2-C-methyl-D-erythritol kinase (282 aa).

K12 is a catalytic residue. 95 to 105 (PMGGGIGGGSS) is a binding site for ATP. The active site involves D137.

This sequence belongs to the GHMP kinase family. IspE subfamily.

The enzyme catalyses 4-CDP-2-C-methyl-D-erythritol + ATP = 4-CDP-2-C-methyl-D-erythritol 2-phosphate + ADP + H(+). The protein operates within isoprenoid biosynthesis; isopentenyl diphosphate biosynthesis via DXP pathway; isopentenyl diphosphate from 1-deoxy-D-xylulose 5-phosphate: step 3/6. Its function is as follows. Catalyzes the phosphorylation of the position 2 hydroxy group of 4-diphosphocytidyl-2C-methyl-D-erythritol. The polypeptide is 4-diphosphocytidyl-2-C-methyl-D-erythritol kinase (Pseudomonas aeruginosa (strain LESB58)).